We begin with the raw amino-acid sequence, 503 residues long: Glycerol kinase (503 aa).

An ADP-binding site is contributed by threonine 14. ATP is bound by residues threonine 14, threonine 15, and serine 16. Position 14 (threonine 14) interacts with sn-glycerol 3-phosphate. Arginine 18 is a binding site for ADP. Residues arginine 84, glutamate 85, tyrosine 136, and aspartate 246 each coordinate sn-glycerol 3-phosphate. Arginine 84, glutamate 85, tyrosine 136, aspartate 246, and glutamine 247 together coordinate glycerol. ADP is bound by residues threonine 268 and glycine 311. ATP contacts are provided by threonine 268, glycine 311, glutamine 315, and glycine 412. 2 residues coordinate ADP: glycine 412 and asparagine 416.

Belongs to the FGGY kinase family.

The enzyme catalyses glycerol + ATP = sn-glycerol 3-phosphate + ADP + H(+). It participates in polyol metabolism; glycerol degradation via glycerol kinase pathway; sn-glycerol 3-phosphate from glycerol: step 1/1. Its activity is regulated as follows. Inhibited by fructose 1,6-bisphosphate (FBP). Key enzyme in the regulation of glycerol uptake and metabolism. Catalyzes the phosphorylation of glycerol to yield sn-glycerol 3-phosphate. The polypeptide is Glycerol kinase (Haemophilus influenzae (strain PittEE)).